A 450-amino-acid polypeptide reads, in one-letter code: Tubulin alpha-3 chain (450 aa).

GTP is bound by residues Gln-11, Glu-71, Gly-144, Thr-145, Thr-179, Asn-206, and Asn-228. Residue Glu-71 coordinates Mg(2+). The active site involves Glu-254.

Belongs to the tubulin family. As to quaternary structure, dimer of alpha and beta chains. A typical microtubule is a hollow water-filled tube with an outer diameter of 25 nm and an inner diameter of 15 nM. Alpha-beta heterodimers associate head-to-tail to form protofilaments running lengthwise along the microtubule wall with the beta-tubulin subunit facing the microtubule plus end conferring a structural polarity. Microtubules usually have 13 protofilaments but different protofilament numbers can be found in some organisms and specialized cells. Requires Mg(2+) as cofactor. In terms of processing, undergoes a tyrosination/detyrosination cycle, the cyclic removal and re-addition of a C-terminal tyrosine residue by the enzymes tubulin tyrosine carboxypeptidase (TTCP) and tubulin tyrosine ligase (TTL), respectively.

It localises to the cytoplasm. It is found in the cytoskeleton. It carries out the reaction GTP + H2O = GDP + phosphate + H(+). Its function is as follows. Tubulin is the major constituent of microtubules, a cylinder consisting of laterally associated linear protofilaments composed of alpha- and beta-tubulin heterodimers. Microtubules grow by the addition of GTP-tubulin dimers to the microtubule end, where a stabilizing cap forms. Below the cap, tubulin dimers are in GDP-bound state, owing to GTPase activity of alpha-tubulin. The chain is Tubulin alpha-3 chain (TUBA3) from Eleusine indica (Goosegrass).